We begin with the raw amino-acid sequence, 262 residues long: Small ribosomal subunit protein uS3 (262 aa).

In terms of domain architecture, KH type-2 spans 38–106; it reads LRKIIAKELE…KVKLNIQEIH (69 aa). A disordered region spans residues 211-262; that stretch reads KGQTQLPQPAVAAARPGLTVEEEERPQRKGGRGGRGANAGAARGGRGGRSRS. The segment covering 243–255 has biased composition (gly residues); the sequence is GGRGANAGAARGG.

Belongs to the universal ribosomal protein uS3 family. As to quaternary structure, part of the 30S ribosomal subunit. Forms a tight complex with proteins S10 and S14.

Functionally, binds the lower part of the 30S subunit head. Binds mRNA in the 70S ribosome, positioning it for translation. In Roseiflexus sp. (strain RS-1), this protein is Small ribosomal subunit protein uS3.